A 328-amino-acid polypeptide reads, in one-letter code: MSEEKETIKERSSGFISVRDIPGVGSSIADKLEAAGYLSAWSIVVARAEELAERTGLPVLTVQKIIENARKMLGITFKTAREVKQERSNIGKITTGSKSLDELLGGGVETKTITEFFGEYGSGKTQICHQLSVNVQLTPEKGGLNGRAVYIDTEGTFRWERIEAMARALGLDPDKVMDNIYYMRAYNSDHQIAIVDELFTFVPKNDVRLVILDSVTSHFRAEYPGREHLAERQQKLNSHLHQLMRLAEAYNVAVVVTNQVMARPDVFYGDPTTAVGGHVLAHTPGVRIQLRKSKGNKRIARVVDAPHLPEGEVVFVITEEGIRDSEEE.

Residue 118-125 (GEYGSGKT) participates in ATP binding.

It belongs to the eukaryotic RecA-like protein family.

In terms of biological role, involved in DNA repair and in homologous recombination. Binds and assemble on single-stranded DNA to form a nucleoprotein filament. Hydrolyzes ATP in a ssDNA-dependent manner and promotes DNA strand exchange between homologous DNA molecules. The protein is DNA repair and recombination protein RadA (radA) of Desulfurococcus amylolyticus.